We begin with the raw amino-acid sequence, 388 residues long: MGRTHLFTSESVTEGHPDKVADCISDAVLDALISQDKNCRVACETLVTTGVAFIAGEITANATVNFPDIVRDTIRRIGYTSSDMGFDWQTCSVVTSIDKQSPDIAQGVNEGDGLFKEQGAGDQGLMFGFACDETPELMPAPISYAHKLTKQLADVRKNGVLDFLRPDGKSQVTVQYEDGQPKRIDTIVISSQHSPDVTYDELKDRIIAEVILPVIPGELLDEQTKYFINPTGRFVVGGPMGDCGLTGRKIIVDTYGGMGRHGGGCFSGKDPSKVDRSASYMGRHVAKNIVAAGIAKRCEVQVAYAIGVAQPVSVMVDLMGTGRIPEADAERIVREVFDLRPAAIIDYLDLKRPIYGPTAAYGHFGRTGDSFPWESTRRADEIRGKAGI.

Position 16 (His-16) interacts with ATP. Asp-18 provides a ligand contact to Mg(2+). K(+) is bound at residue Glu-44. L-methionine contacts are provided by Glu-57 and Gln-100. The segment at 100–110 (QSPDIAQGVNE) is flexible loop. ATP contacts are provided by residues 167–169 (DGK), 233–234 (RF), Asp-242, 248–249 (RK), and Lys-269. Asp-242 is a binding site for L-methionine. Position 273 (Lys-273) interacts with L-methionine.

The protein belongs to the AdoMet synthase family. Homotetramer; dimer of dimers. It depends on Mg(2+) as a cofactor. K(+) serves as cofactor.

Its subcellular location is the cytoplasm. The catalysed reaction is L-methionine + ATP + H2O = S-adenosyl-L-methionine + phosphate + diphosphate. The protein operates within amino-acid biosynthesis; S-adenosyl-L-methionine biosynthesis; S-adenosyl-L-methionine from L-methionine: step 1/1. Its function is as follows. Catalyzes the formation of S-adenosylmethionine (AdoMet) from methionine and ATP. The overall synthetic reaction is composed of two sequential steps, AdoMet formation and the subsequent tripolyphosphate hydrolysis which occurs prior to release of AdoMet from the enzyme. The chain is S-adenosylmethionine synthase from Desulfosudis oleivorans (strain DSM 6200 / JCM 39069 / Hxd3) (Desulfococcus oleovorans).